We begin with the raw amino-acid sequence, 444 residues long: Phosphoglucosamine mutase (444 aa).

The active-site Phosphoserine intermediate is the Ser99. Residues Ser99, Asp242, Asp244, and Asp246 each contribute to the Mg(2+) site. At Ser99 the chain carries Phosphoserine.

This sequence belongs to the phosphohexose mutase family. Mg(2+) is required as a cofactor. In terms of processing, activated by phosphorylation.

The catalysed reaction is alpha-D-glucosamine 1-phosphate = D-glucosamine 6-phosphate. Functionally, catalyzes the conversion of glucosamine-6-phosphate to glucosamine-1-phosphate. The polypeptide is Phosphoglucosamine mutase (Aliarcobacter butzleri (strain RM4018) (Arcobacter butzleri)).